The sequence spans 140 residues: Putative peptidyl-tRNA hydrolase PTRHD1 (140 aa).

It belongs to the PTH2 family. PTRHD1 subfamily.

The catalysed reaction is an N-acyl-L-alpha-aminoacyl-tRNA + H2O = an N-acyl-L-amino acid + a tRNA + H(+). Its function is as follows. As a putative peptidyl-tRNA hydrolase, it might be involved in releasing tRNAs from the ribosome during protein synthesis. Some evidence, however, suggests that it lacks peptidyl-tRNA hydrolase activity. The polypeptide is Putative peptidyl-tRNA hydrolase PTRHD1 (PTRHD1) (Homo sapiens (Human)).